The sequence spans 397 residues: S-adenosylmethionine synthase (397 aa).

Residue His15 coordinates ATP. Asp17 lines the Mg(2+) pocket. Glu43 is a K(+) binding site. Residues Glu56 and Gln99 each coordinate L-methionine. The segment at 99 to 109 (QSGDIAMGVDE) is flexible loop. ATP-binding positions include 175–177 (DGK), 241–242 (RF), Asp250, 256–257 (RK), Ala273, and Lys277. Asp250 contributes to the L-methionine binding site. An L-methionine-binding site is contributed by Lys281.

It belongs to the AdoMet synthase family. In terms of assembly, homotetramer; dimer of dimers. Requires Mg(2+) as cofactor. It depends on K(+) as a cofactor.

It is found in the cytoplasm. The catalysed reaction is L-methionine + ATP + H2O = S-adenosyl-L-methionine + phosphate + diphosphate. It participates in amino-acid biosynthesis; S-adenosyl-L-methionine biosynthesis; S-adenosyl-L-methionine from L-methionine: step 1/1. Catalyzes the formation of S-adenosylmethionine (AdoMet) from methionine and ATP. The overall synthetic reaction is composed of two sequential steps, AdoMet formation and the subsequent tripolyphosphate hydrolysis which occurs prior to release of AdoMet from the enzyme. This Clostridioides difficile (strain 630) (Peptoclostridium difficile) protein is S-adenosylmethionine synthase.